The primary structure comprises 354 residues: Photosystem II protein D1 (354 aa).

Thr-2 carries the N-acetylthreonine modification. Thr-2 carries the post-translational modification Phosphothreonine. 3 consecutive transmembrane segments (helical) span residues 29-46, 118-133, and 142-156; these read YIGW…TATS, HFLL…EWEL, and WIAV…AATA. Residue His-118 participates in chlorophyll a binding. Position 126 (Tyr-126) interacts with pheophytin a. The [CaMn4O5] cluster site is built by Asp-170 and Glu-189. Residues 197-218 traverse the membrane as a helical segment; sequence FHMLGVAGVFGGSLFSAMHGSL. His-198 contacts chlorophyll a. A quinone-binding positions include His-215 and 264–265; that span reads SF. A Fe cation-binding site is contributed by His-215. His-272 contributes to the Fe cation binding site. Residues 274–288 traverse the membrane as a helical segment; that stretch reads FLAAWPVVGIWFTAL. [CaMn4O5] cluster-binding residues include His-332, Glu-333, Asp-342, and Ala-344. A propeptide spanning residues 345–354 is cleaved from the precursor; sequence ASIEAPSLNG.

Belongs to the reaction center PufL/M/PsbA/D family. As to quaternary structure, PSII is composed of 1 copy each of membrane proteins PsbA, PsbB, PsbC, PsbD, PsbE, PsbF, PsbH, PsbI, PsbJ, PsbK, PsbL, PsbM, PsbT, PsbX, PsbY, PsbZ, Psb30/Ycf12, at least 3 peripheral proteins of the oxygen-evolving complex and a large number of cofactors. It forms dimeric complexes. The cofactor is The D1/D2 heterodimer binds P680, chlorophylls that are the primary electron donor of PSII, and subsequent electron acceptors. It shares a non-heme iron and each subunit binds pheophytin, quinone, additional chlorophylls, carotenoids and lipids. D1 provides most of the ligands for the Mn4-Ca-O5 cluster of the oxygen-evolving complex (OEC). There is also a Cl(-1) ion associated with D1 and D2, which is required for oxygen evolution. The PSII complex binds additional chlorophylls, carotenoids and specific lipids.. Post-translationally, tyr-161 forms a radical intermediate that is referred to as redox-active TyrZ, YZ or Y-Z. C-terminally processed by CTPA; processing is essential to allow assembly of the oxygen-evolving complex and thus photosynthetic growth.

It is found in the plastid. It localises to the chloroplast thylakoid membrane. The catalysed reaction is 2 a plastoquinone + 4 hnu + 2 H2O = 2 a plastoquinol + O2. Its function is as follows. Photosystem II (PSII) is a light-driven water:plastoquinone oxidoreductase that uses light energy to abstract electrons from H(2)O, generating O(2) and a proton gradient subsequently used for ATP formation. It consists of a core antenna complex that captures photons, and an electron transfer chain that converts photonic excitation into a charge separation. The D1/D2 (PsbA/PsbD) reaction center heterodimer binds P680, the primary electron donor of PSII as well as several subsequent electron acceptors. This is Photosystem II protein D1 from Selaginella uncinata (Blue spike-moss).